We begin with the raw amino-acid sequence, 362 residues long: Histidine protein methyltransferase 1 homolog (362 aa).

Residues 28 to 89 (KSQKGKEDKN…ACEKQPSLKP (62 aa)) are disordered. Polar residues predominate over residues 55 to 73 (SLGSAASSEDTDSPPSTAD). 2 positions are modified to phosphoserine: S62 and S67. A Tele-methylhistidine modification is found at H144. Residues 158–162 (IWECT), G185, and 206–208 (QDY) contribute to the S-adenosyl-L-methionine site. The Nuclear localization signal motif lies at 237–243 (PAGKRQR). S-adenosyl-L-methionine-binding positions include 259–261 (GEW) and S283.

Belongs to the methyltransferase superfamily. METTL18 family. Interacts with GRWD1 and members of the heat shock protein 90 and 70 families; these proteins may possibly be methylation substrates for the enzyme. Post-translationally, monomethylated at His-144 through automethylation. Automethylation at His-144 positively regulates the methyltransferase activity toward RPL3. Probably methylated on other residues.

Its subcellular location is the cytoplasm. The protein localises to the cytosol. It is found in the nucleus. The protein resides in the nucleolus. It catalyses the reaction L-histidyl-[protein] + S-adenosyl-L-methionine = N(tele)-methyl-L-histidyl-[protein] + S-adenosyl-L-homocysteine + H(+). Its function is as follows. Protein-L-histidine N-tele-methyltransferase that specifically monomethylates RPL3, thereby regulating translation elongation. Histidine methylation of RPL3 regulates translation elongation by slowing ribosome traversal on tyrosine codons: slower elongation provides enough time for proper folding of synthesized proteins and prevents cellular aggregation of tyrosine-rich proteins. The sequence is that of Histidine protein methyltransferase 1 homolog from Rattus norvegicus (Rat).